Consider the following 151-residue polypeptide: Large ribosomal subunit protein uL15 (151 aa).

A disordered region spans residues 1-57; the sequence is MTLRLDSLKSNKGARRRKLRKGRGIAAGQGASCGFGMRGQKSRSGRPTRPGFEGGQM. The span at 12–23 shows a compositional bias: basic residues; it reads KGARRRKLRKGR. Over residues 25–37 the composition is skewed to gly residues; it reads IAAGQGASCGFGM.

It belongs to the universal ribosomal protein uL15 family. As to quaternary structure, part of the 50S ribosomal subunit.

Functionally, binds to the 23S rRNA. The polypeptide is Large ribosomal subunit protein uL15 (Synechococcus sp. (strain CC9605)).